Here is a 298-residue protein sequence, read N- to C-terminus: Centromere protein O (298 aa).

Residues 29 to 49 (NISNRKSEEPAVRKKESSLRT) are disordered. The span at 33 to 49 (RKSEEPAVRKKESSLRT) shows a compositional bias: basic and acidic residues. Residue Ser-35 is modified to Phosphoserine. Residues 39–74 (AVRKKESSLRTKIRELRQQRDKLRAEVKQWGARVKE) are a coiled coil.

The protein belongs to the CENP-O/MCM21 family. Component of the CENPA-CAD complex, composed of CENPI, CENPK, CENPL, CENPO, CENPP, CENPQ, CENPR and CENPS. The CENPA-CAD complex interacts with the CENPA-NAC complex, at least composed of CENPA, CENPC, CENPH, CENPM, CENPN, CENPT and CENPU.

The protein localises to the nucleus. It is found in the chromosome. Its subcellular location is the centromere. The protein resides in the kinetochore. In terms of biological role, component of the CENPA-CAD (nucleosome distal) complex, a complex recruited to centromeres which is involved in assembly of kinetochore proteins, mitotic progression and chromosome segregation. May be involved in incorporation of newly synthesized CENPA into centromeres via its interaction with the CENPA-NAC complex. Modulates the kinetochore-bound levels of NDC80 complex. The sequence is that of Centromere protein O (Cenpo) from Mus musculus (Mouse).